Here is a 316-residue protein sequence, read N- to C-terminus: Olfactory receptor 6B9 (316 aa).

At 1-22 (MENITNISEFILMGFPTAPWLQ) the chain is on the extracellular side. 2 N-linked (GlcNAc...) asparagine glycosylation sites follow: N3 and N6. Residues 23-43 (ILLFSIFFITYVFVLLENLVI) traverse the membrane as a helical segment. Residues 44–64 (ILTVWVTGSLHKPMYYFLSTM) lie on the Cytoplasmic side of the membrane. The chain crosses the membrane as a helical span at residues 65–85 (SFLEAWYISVTVPKMLAGFLF). Residues 86–97 (RPNTISFLGCMT) lie on the Extracellular side of the membrane. The cysteines at positions 95 and 187 are disulfide-linked. Residues 98 to 118 (QLYFFMSLACTECVLLAAMAY) traverse the membrane as a helical segment. Over 119 to 132 (DRYVAICWPLRYPV) the chain is Cytoplasmic. A helical membrane pass occupies residues 133–153 (MMTTGFCVQLTISSWVSGFTI). The Extracellular segment spans residues 154–199 (SMAKVYFISRVAFCGNNVLNHFFCDVSPILKLACMNLSMAETVDFA). A helical membrane pass occupies residues 200–220 (LAIVILIFPLSATVLSYGFIV). At 221 to 237 (STVLQIPSATGQRKAFS) the chain is on the cytoplasmic side. A helical membrane pass occupies residues 238 to 258 (TCASHLTVVVIFYTAVIFMYV). Topologically, residues 259 to 269 (RPRAIASFNSN) are extracellular. A helical transmembrane segment spans residues 270–290 (KLISAIYAVFTPMLNPIIYCL). Residues 291-316 (RNKEVKDAIRKTIAGGRAPALGESIS) are Cytoplasmic-facing.

Belongs to the G-protein coupled receptor 1 family. Olfactory epithelium.

Its subcellular location is the cell membrane. Odorant receptor. This is Olfactory receptor 6B9 from Mus musculus (Mouse).